A 499-amino-acid chain; its full sequence is Cytochrome P450 11B1, mitochondrial (499 aa).

Residues 1-24 (MALRVTADVWLARPWQCLHRTRAL) constitute a mitochondrion transit peptide. Residue cysteine 446 coordinates heme.

Belongs to the cytochrome P450 family. The cofactor is heme. As to expression, adrenal zona fasciculata/reticularis.

The protein resides in the mitochondrion inner membrane. The enzyme catalyses a steroid + 2 reduced [adrenodoxin] + O2 + 2 H(+) = an 11beta-hydroxysteroid + 2 oxidized [adrenodoxin] + H2O. It carries out the reaction 21-hydroxyprogesterone + 2 reduced [adrenodoxin] + O2 + 2 H(+) = corticosterone + 2 oxidized [adrenodoxin] + H2O. It catalyses the reaction 21-hydroxyprogesterone + 2 reduced [adrenodoxin] + O2 + 2 H(+) = 18-hydroxy-11-deoxycorticosterone + 2 oxidized [adrenodoxin] + H2O. The catalysed reaction is 21-hydroxyprogesterone + 2 reduced [adrenodoxin] + O2 + 2 H(+) = 19-hydroxy-11-deoxycorticosterone + 2 oxidized [adrenodoxin] + H2O. The enzyme catalyses 11-deoxycortisol + 2 reduced [adrenodoxin] + O2 + 2 H(+) = cortisol + 2 oxidized [adrenodoxin] + H2O. It carries out the reaction cortisol + 2 reduced [adrenodoxin] + O2 + 2 H(+) = 18-hydroxycortisol + 2 oxidized [adrenodoxin] + H2O. It catalyses the reaction 11-deoxycortisol + 2 reduced [adrenodoxin] + O2 + 2 H(+) = 18-hydroxy-11-deoxycortisol + 2 oxidized [adrenodoxin] + H2O. Its pathway is steroid biosynthesis; glucocorticoid biosynthesis. It functions in the pathway steroid hormone biosynthesis. In terms of biological role, a cytochrome P450 monooxygenase involved in the biosynthesis of adrenal corticoids. Catalyzes a variety of reactions that are essential for many species, including detoxification, defense, and the formation of endogenous chemicals like steroid hormones. Steroid 11beta, 18- and 19-hydroxylase with preferred regioselectivity at 11beta, then 18, and lastly 19. Catalyzes the hydroxylation of 11-deoxycortisol and 11-deoxycorticosterone (21-hydroxyprogesterone) at 11beta position, yielding cortisol or corticosterone, respectively, but cannot produce aldosterone. Mechanistically, uses molecular oxygen inserting one oxygen atom into a substrate for hydroxylation and reducing the second into a water molecule. Two electrons are provided by NADPH via a two-protein mitochondrial transfer system comprising flavoprotein FDXR (adrenodoxin/ferredoxin reductase) and nonheme iron-sulfur protein FDX1 or FDX2 (adrenodoxin/ferredoxin). Due to its lack of 18-oxidation activity, it is incapable of generating aldosterone. Could also be involved in the androgen metabolic pathway. This Rattus norvegicus (Rat) protein is Cytochrome P450 11B1, mitochondrial (Cyp11b1).